The following is a 623-amino-acid chain: Leucine aminopeptidase 2 (623 aa).

Residues 136–138 and 273–278 each bind a peptide; these read QCQ and PYGGME. His302 provides a ligand contact to Zn(2+). The active-site Proton acceptor is Glu303. Residues His306 and Glu325 each coordinate Zn(2+). Tyr390 (proton donor) is an active-site residue.

The protein belongs to the peptidase M1 family. It depends on Zn(2+) as a cofactor.

Its subcellular location is the cytoplasm. The protein resides in the nucleus. The catalysed reaction is an epoxide + H2O = an ethanediol. Its function is as follows. Aminopeptidase that preferentially cleaves di- and tripeptides. Also has low epoxide hydrolase activity (in vitro). Can hydrolyze the epoxide leukotriene LTA(4) but it forms preferentially 5,6-dihydroxy-7,9,11,14-eicosatetraenoic acid rather than the cytokine leukotriene B(4) as the product compared to the homologous mammalian enzyme (in vitro). This is Leucine aminopeptidase 2 from Phaeosphaeria nodorum (strain SN15 / ATCC MYA-4574 / FGSC 10173) (Glume blotch fungus).